The primary structure comprises 174 residues: MTIILGIDPGSRVTGYGLIKESDRKIAYIDSGCIRTSNDTELSHKLLQIYDGICELMDHYSPTEVAIEQIFMHNNPNSALKLGHARGVAMVAAASHRAKIFEYSAREIKQSVVGYGAAEKDQVSHMVVELLQLNRAPQKDAADALAIAICHSHMRNGLSKLIGSRGTKRRRMRL.

Catalysis depends on residues Asp-8, Glu-68, and Asp-140. Mg(2+) is bound by residues Asp-8, Glu-68, and Asp-140.

It belongs to the RuvC family. In terms of assembly, homodimer which binds Holliday junction (HJ) DNA. The HJ becomes 2-fold symmetrical on binding to RuvC with unstacked arms; it has a different conformation from HJ DNA in complex with RuvA. In the full resolvosome a probable DNA-RuvA(4)-RuvB(12)-RuvC(2) complex forms which resolves the HJ. It depends on Mg(2+) as a cofactor.

The protein resides in the cytoplasm. The catalysed reaction is Endonucleolytic cleavage at a junction such as a reciprocal single-stranded crossover between two homologous DNA duplexes (Holliday junction).. Its function is as follows. The RuvA-RuvB-RuvC complex processes Holliday junction (HJ) DNA during genetic recombination and DNA repair. Endonuclease that resolves HJ intermediates. Cleaves cruciform DNA by making single-stranded nicks across the HJ at symmetrical positions within the homologous arms, yielding a 5'-phosphate and a 3'-hydroxyl group; requires a central core of homology in the junction. The consensus cleavage sequence is 5'-(A/T)TT(C/G)-3'. Cleavage occurs on the 3'-side of the TT dinucleotide at the point of strand exchange. HJ branch migration catalyzed by RuvA-RuvB allows RuvC to scan DNA until it finds its consensus sequence, where it cleaves and resolves the cruciform DNA. In Legionella pneumophila subsp. pneumophila (strain Philadelphia 1 / ATCC 33152 / DSM 7513), this protein is Crossover junction endodeoxyribonuclease RuvC.